The chain runs to 130 residues: Small ribosomal subunit protein uS8 (130 aa).

Belongs to the universal ribosomal protein uS8 family. In terms of assembly, part of the 30S ribosomal subunit.

Functionally, one of the primary rRNA binding proteins, it binds directly to 16S rRNA central domain where it helps coordinate assembly of the platform of the 30S subunit. The sequence is that of Small ribosomal subunit protein uS8 from Thermococcus gammatolerans (strain DSM 15229 / JCM 11827 / EJ3).